A 324-amino-acid chain; its full sequence is Phospho-N-acetylmuramoyl-pentapeptide-transferase (324 aa).

Helical transmembrane passes span 5–25, 52–72, 77–97, 122–142, 149–169, 176–196, 201–221, 227–247, 253–273, and 302–322; these read GLLV…PLFI, PTMG…IMAI, LGAE…IGFL, VIAI…YIMI, FELG…GSNA, LDGL…IIAV, FGVA…LVFN, VFMG…VAIL, LLVI…IQVI, and VVVT…YIGV.

Belongs to the glycosyltransferase 4 family. MraY subfamily. The cofactor is Mg(2+).

The protein resides in the cell membrane. It catalyses the reaction UDP-N-acetyl-alpha-D-muramoyl-L-alanyl-gamma-D-glutamyl-meso-2,6-diaminopimeloyl-D-alanyl-D-alanine + di-trans,octa-cis-undecaprenyl phosphate = di-trans,octa-cis-undecaprenyl diphospho-N-acetyl-alpha-D-muramoyl-L-alanyl-D-glutamyl-meso-2,6-diaminopimeloyl-D-alanyl-D-alanine + UMP. The protein operates within cell wall biogenesis; peptidoglycan biosynthesis. Its function is as follows. Catalyzes the initial step of the lipid cycle reactions in the biosynthesis of the cell wall peptidoglycan: transfers peptidoglycan precursor phospho-MurNAc-pentapeptide from UDP-MurNAc-pentapeptide onto the lipid carrier undecaprenyl phosphate, yielding undecaprenyl-pyrophosphoryl-MurNAc-pentapeptide, known as lipid I. In Bacillus cereus (strain AH820), this protein is Phospho-N-acetylmuramoyl-pentapeptide-transferase.